A 185-amino-acid polypeptide reads, in one-letter code: Peptidyl-tRNA hydrolase (185 aa).

Residue tyrosine 14 participates in tRNA binding. Histidine 19 serves as the catalytic Proton acceptor. TRNA contacts are provided by phenylalanine 64, asparagine 66, and asparagine 112.

The protein belongs to the PTH family. As to quaternary structure, monomer.

Its subcellular location is the cytoplasm. The catalysed reaction is an N-acyl-L-alpha-aminoacyl-tRNA + H2O = an N-acyl-L-amino acid + a tRNA + H(+). Its function is as follows. Hydrolyzes ribosome-free peptidyl-tRNAs (with 1 or more amino acids incorporated), which drop off the ribosome during protein synthesis, or as a result of ribosome stalling. In terms of biological role, catalyzes the release of premature peptidyl moieties from peptidyl-tRNA molecules trapped in stalled 50S ribosomal subunits, and thus maintains levels of free tRNAs and 50S ribosomes. The sequence is that of Peptidyl-tRNA hydrolase from Halalkalibacterium halodurans (strain ATCC BAA-125 / DSM 18197 / FERM 7344 / JCM 9153 / C-125) (Bacillus halodurans).